A 214-amino-acid chain; its full sequence is Ion-translocating oxidoreductase complex subunit G (214 aa).

The chain crosses the membrane as a helical span at residues alanine 13 to phenylalanine 33. Threonine 180 bears the FMN phosphoryl threonine mark.

This sequence belongs to the RnfG family. The complex is composed of six subunits: RnfA, RnfB, RnfC, RnfD, RnfE and RnfG. The cofactor is FMN.

Its subcellular location is the cell inner membrane. In terms of biological role, part of a membrane-bound complex that couples electron transfer with translocation of ions across the membrane. The polypeptide is Ion-translocating oxidoreductase complex subunit G (Pseudomonas aeruginosa (strain UCBPP-PA14)).